We begin with the raw amino-acid sequence, 810 residues long: Phenylalanine--tRNA ligase beta subunit (810 aa).

The region spanning 40–153 (KLPDQKVIVG…EACEIGQPLA (114 aa)) is the tRNA-binding domain. In terms of domain architecture, B5 spans 399–480 (AAQKIVSLRP…RLYGYNNLEP (82 aa)). Positions 458, 464, 467, and 468 each coordinate Mg(2+). One can recognise an FDX-ACB domain in the interval 714-808 (SKFPVVERDL…ARSELGAVIR (95 aa)).

This sequence belongs to the phenylalanyl-tRNA synthetase beta subunit family. Type 1 subfamily. In terms of assembly, tetramer of two alpha and two beta subunits. Mg(2+) serves as cofactor.

It is found in the cytoplasm. It carries out the reaction tRNA(Phe) + L-phenylalanine + ATP = L-phenylalanyl-tRNA(Phe) + AMP + diphosphate + H(+). The chain is Phenylalanine--tRNA ligase beta subunit from Chlorobaculum tepidum (strain ATCC 49652 / DSM 12025 / NBRC 103806 / TLS) (Chlorobium tepidum).